The sequence spans 98 residues: NADH-ubiquinone oxidoreductase chain 4L (98 aa).

The next 3 membrane-spanning stretches (helical) occupy residues 2-22, 29-49, and 61-81; these read SLVY…LLMF, SLLC…ILIL, and IIML…LVMV.

The protein belongs to the complex I subunit 4L family. In terms of assembly, core subunit of respiratory chain NADH dehydrogenase (Complex I) which is composed of 45 different subunits.

It localises to the mitochondrion inner membrane. The catalysed reaction is a ubiquinone + NADH + 5 H(+)(in) = a ubiquinol + NAD(+) + 4 H(+)(out). In terms of biological role, core subunit of the mitochondrial membrane respiratory chain NADH dehydrogenase (Complex I) which catalyzes electron transfer from NADH through the respiratory chain, using ubiquinone as an electron acceptor. Part of the enzyme membrane arm which is embedded in the lipid bilayer and involved in proton translocation. This chain is NADH-ubiquinone oxidoreductase chain 4L (MT-ND4L), found in Galemys pyrenaicus (Iberian desman).